A 235-amino-acid polypeptide reads, in one-letter code: Small ribosomal subunit protein uS2c (235 aa).

Belongs to the universal ribosomal protein uS2 family.

The protein resides in the plastid. It is found in the chloroplast. The chain is Small ribosomal subunit protein uS2c (rps2) from Huperzia lucidula (Shining clubmoss).